The following is a 181-amino-acid chain: MILVVGLGNIGVEYENTRHNVGFMLIDLLLKESNFTNLTNSKFKGELFKIGSSLLLLKPSTYMNNSGLSVKAVNDFYKCERMIVIHDDIDINLGALRFKKGGSSGGHNGLKSIDTLCGNDYERVRIGVGKGENVISHVLGKFKSEEEITLSKVLEHAKKALLELIENDDLSAISSKYSLKA.

Tyrosine 14 contacts tRNA. Histidine 19 (proton acceptor) is an active-site residue. Positions 62, 64, and 108 each coordinate tRNA.

It belongs to the PTH family. In terms of assembly, monomer.

The protein resides in the cytoplasm. It carries out the reaction an N-acyl-L-alpha-aminoacyl-tRNA + H2O = an N-acyl-L-amino acid + a tRNA + H(+). Hydrolyzes ribosome-free peptidyl-tRNAs (with 1 or more amino acids incorporated), which drop off the ribosome during protein synthesis, or as a result of ribosome stalling. Functionally, catalyzes the release of premature peptidyl moieties from peptidyl-tRNA molecules trapped in stalled 50S ribosomal subunits, and thus maintains levels of free tRNAs and 50S ribosomes. This chain is Peptidyl-tRNA hydrolase, found in Campylobacter jejuni subsp. jejuni serotype O:2 (strain ATCC 700819 / NCTC 11168).